The following is a 157-amino-acid chain: Crossover junction endodeoxyribonuclease RuvC (157 aa).

Active-site residues include Asp7, Glu67, and Asp140. Positions 7, 67, and 140 each coordinate Mg(2+).

It belongs to the RuvC family. As to quaternary structure, homodimer which binds Holliday junction (HJ) DNA. The HJ becomes 2-fold symmetrical on binding to RuvC with unstacked arms; it has a different conformation from HJ DNA in complex with RuvA. In the full resolvosome a probable DNA-RuvA(4)-RuvB(12)-RuvC(2) complex forms which resolves the HJ. The cofactor is Mg(2+).

The protein resides in the cytoplasm. It carries out the reaction Endonucleolytic cleavage at a junction such as a reciprocal single-stranded crossover between two homologous DNA duplexes (Holliday junction).. The RuvA-RuvB-RuvC complex processes Holliday junction (HJ) DNA during genetic recombination and DNA repair. Endonuclease that resolves HJ intermediates. Cleaves cruciform DNA by making single-stranded nicks across the HJ at symmetrical positions within the homologous arms, yielding a 5'-phosphate and a 3'-hydroxyl group; requires a central core of homology in the junction. The consensus cleavage sequence is 5'-(A/T)TT(C/G)-3'. Cleavage occurs on the 3'-side of the TT dinucleotide at the point of strand exchange. HJ branch migration catalyzed by RuvA-RuvB allows RuvC to scan DNA until it finds its consensus sequence, where it cleaves and resolves the cruciform DNA. The sequence is that of Crossover junction endodeoxyribonuclease RuvC from Rickettsia conorii (strain ATCC VR-613 / Malish 7).